A 432-amino-acid chain; its full sequence is Transcriptional adapter 3 (432 aa).

K21 participates in a covalent cross-link: Glycyl lysine isopeptide (Lys-Gly) (interchain with G-Cter in SUMO2). Residues 40-69 adopt a coiled-coil conformation; it reads IEELDTLQLELETLLSSASRRLRVLEAETQ. The disordered stretch occupies residues 87 to 127; that stretch reads GRDHELGAPPKHGKPKKQKLEGKTGHGPGPGPGRPKSKNVQ. Residue K129 forms a Glycyl lysine isopeptide (Lys-Gly) (interchain with G-Cter in SUMO2) linkage. The tract at residues 272–319 is disordered; sequence NIISPMEDSPIPDMSGKESGADGASTSPRNQNKPFSVPHTKSLESRIK. Phosphoserine is present on residues S280 and S298. Polar residues predominate over residues 295-305; that stretch reads ASTSPRNQNKP. Residues 367 to 407 are a coiled coil; the sequence is LLRLAKEEVSRQELRQRVRMADNEVMDAFRKIMAARQKKRT. At K418 the chain carries N6-acetyllysine.

This sequence belongs to the NGG1 family. As to quaternary structure, the PCAF complex is composed of a number of TBP-associated factors (TAFS), such as TAF5, TAF5L, TAF6, TAF6L, TAF9, TAF10 and TAF12, PCAF, and also PCAF-associated factors (PAFs), such as TADA2L/ADA2, TADA3L/ADA3 and SPT3. Interacts directly with TADA2L and PCAF and also with the high-risk HPV oncoprotein E6. Component of the STAGA transcription coactivator-HAT complex, at least composed of SUPT3H, GCN5L2, TAF5L, TAF6L, SUPT7L, TADA3L, TAD1L, TAF10, TAF12, TRRAP and TAF9. Component of the TFTC-HAT complex. Component of the ADA2A-containing complex (ATAC), composed of KAT14, KAT2A, TADA2L, TADA3L, ZZ3, MBIP, WDR5, YEATS2, CCDC101 and DR1.

The protein localises to the nucleus. Its function is as follows. Functions as a component of the PCAF complex. The PCAF complex is capable of efficiently acetylating histones in a nucleosomal context. The PCAF complex could be considered as the human version of the yeast SAGA complex. Also known as a coactivator for p53/TP53-dependent transcriptional activation. Component of the ATAC complex, a complex with histone acetyltransferase activity on histones H3 and H4. In Mus musculus (Mouse), this protein is Transcriptional adapter 3 (Tada3).